The primary structure comprises 338 residues: Putative peptide import ATP-binding protein BMEII0863 (338 aa).

One can recognise an ABC transporter domain in the interval lysine 10 to leucine 263. Glycine 43–serine 50 lines the ATP pocket.

This sequence belongs to the ABC transporter superfamily. In terms of assembly, the complex is composed of two ATP-binding proteins (BMEII0863 and BMEII0864), two transmembrane proteins (BMEII0860 and BMEII0861) and a solute-binding protein (BMEII0859).

The protein resides in the cell inner membrane. Probably part of an ABC transporter complex that could be involved in peptide import. Probably responsible for energy coupling to the transport system. The protein is Putative peptide import ATP-binding protein BMEII0863 of Brucella melitensis biotype 1 (strain ATCC 23456 / CCUG 17765 / NCTC 10094 / 16M).